The sequence spans 301 residues: Small ribosomal subunit protein uS2 (301 aa).

The tract at residues V282 to K301 is disordered. The span at E289–K301 shows a compositional bias: low complexity.

This sequence belongs to the universal ribosomal protein uS2 family.

The protein is Small ribosomal subunit protein uS2 of Koribacter versatilis (strain Ellin345).